The chain runs to 508 residues: O-acetyltransferase pigM (508 aa).

A disordered region spans residues 166–188 (TPAPDERGKISPSLEDAAGSPRT).

It functions in the pathway secondary metabolite biosynthesis. Its function is as follows. O-acetyltransferase; part of the gene cluster that mediates the biosynthesis of azaphilone pigments (MonAzPs), a complex mixture of compounds with a common azaphilone skeleton very widely used as food colorants. PigM and pigO are involved in the elimination of the omega-1 alcohol with pigM acting as an O-acetyltransferase that synthesizes the O-11 acetyl intermediate whereas pigO eliminates acetic acid to yield an intermediate with a C10(11) double bond. The first step of the pathway is performed by the nrPKS pigA that forms the hexaketide precursor from successive condensations of five malonyl-CoA units, with a simple acetyl-CoA starter unit. The role of esterase pigG is not clear, but it may play at most a supplementary role in the formation of the benzaldehyde produced by the pigA nrPKS. This very reactive benzaldehyde is intercepted by the pigC ketoreductase that to provide the first stable enzyme-free MonAzPs intermediate, 6-(4-hydroxy-2-oxopentyl)-3-methyl-2,4-dioxocyclohexane carbaldehyde, also known as M7PKS-1. The FAD-dependent monooxygenase pigN hydroxylates M7PKS-1 at C-4, which triggers the formation of the pyran ring. PigJ, pigK and pigD are involved in the acetylation of the pyran ring. PigJ and pigK form the two subunits of a dedicated fungal FAS that produces the side chain fatty acyl moiety of MonAzPs and pigD transfers the fatty acyl chain to the C-4 alcohol. PigM and pigO are involved in the elimination of the omega-1 alcohol. PigM acts as an O-acetyltransferase that synthesizes the putative O-11 acetyl intermediate whereas pigO eliminates acetic acid to yield an intermediate with a C10(11) double bond. The dehydration of the C-11 alcohol followed by the reduction of the C6(7) double bond by the NAD(P)H-dependent oxidoreductase pigE increases the electrophilicity of the C-5 ketone of the resulting acyl benzopyran. This in turn sets up the C-5 ketone for an intramolecular Knoevenagel aldol condensation with the C-20 enol of the side chain. This condensation affords the characteristic linear tricyclic carbon skeletons of the yellow pigments that serve as the common precursors for the classical yellow pigments monascin and ankaflavin, orange pigments rubopunctatin and monascorubrin, and red pigments ribropunctamine and monascorubramine. The FAD-dependent oxidoreductase pigF is especially invoved in the biosynthesis of orange and red pigments via desaturation of C6(7). This Monascus ruber (Mold) protein is O-acetyltransferase pigM.